Here is a 348-residue protein sequence, read N- to C-terminus: MNPYVLMILLSSLGLGTTLTFASSHWLLAWMGLEINTLAITPLMAQHHHPRAVEATTKYFLTQATAAAMILFASTTNAWMTGEWSITDLSDPLANTMFMTALALKIGLAPMHFWMPEVLQGLDLLTGLILSTWQKLAPFALIIQTAQNIDPLLLTLLGVTSTLVGGWGGLNQTQLRKILAYSSIAHMGWMIIVIQYAPQLTLLALGTYIIMTSAAFLTLKMSLTTKVSTLATTWSKSPILTATTALVLLSLGGLPPLTGFMPKWLILQELTKQDLPIIATTMALAALISLYFYLRLCYAMTLTISPNTTNSTTPWRTQTTQASMPLALFTMATLGLLPMTPAILTLTT.

9 helical membrane passes run 3-23 (PYVL…TFAS), 60-80 (FLTQ…NAWM), 96-116 (TMFM…FWMP), 149-169 (IDPL…GWGG), 178-197 (ILAY…IQYA), 202-219 (LLAL…FLTL), 246-266 (LVLL…KWLI), 274-294 (DLPI…YFYL), and 326-346 (LALF…ILTL).

It belongs to the complex I subunit 2 family.

It localises to the mitochondrion inner membrane. It catalyses the reaction a ubiquinone + NADH + 5 H(+)(in) = a ubiquinol + NAD(+) + 4 H(+)(out). Core subunit of the mitochondrial membrane respiratory chain NADH dehydrogenase (Complex I) that is believed to belong to the minimal assembly required for catalysis. Complex I functions in the transfer of electrons from NADH to the respiratory chain. The immediate electron acceptor for the enzyme is believed to be ubiquinone. This chain is NADH-ubiquinone oxidoreductase chain 2 (MT-ND2), found in Carassius auratus (Goldfish).